The chain runs to 467 residues: Nodulation protein T (467 aa).

The N-terminal stretch at 1–17 is a signal peptide; it reads MRFTRYTTPFFSLLLSG. Cys18 is lipidated: N-palmitoyl cysteine. Cys18 carries the S-diacylglycerol cysteine lipid modification.

This sequence belongs to the outer membrane factor (OMF) (TC 1.B.17) family.

Its subcellular location is the cell membrane. This is Nodulation protein T (nodT) from Rhizobium leguminosarum bv. trifolii.